Consider the following 96-residue polypeptide: Co-chaperonin GroES (96 aa).

Belongs to the GroES chaperonin family. As to quaternary structure, heptamer of 7 subunits arranged in a ring. Interacts with the chaperonin GroEL.

It is found in the cytoplasm. Together with the chaperonin GroEL, plays an essential role in assisting protein folding. The GroEL-GroES system forms a nano-cage that allows encapsulation of the non-native substrate proteins and provides a physical environment optimized to promote and accelerate protein folding. GroES binds to the apical surface of the GroEL ring, thereby capping the opening of the GroEL channel. This chain is Co-chaperonin GroES, found in Buchnera aphidicola subsp. Schizaphis graminum (strain Sg).